The following is a 200-amino-acid chain: uncharacterized protein (200 aa).

Residues 3-119 form the Response regulatory domain; it reads RLFIAEDQRM…DLADAIRKCV (117 aa). A 4-aspartylphosphate modification is found at aspartate 54. Positions 133–198 constitute an HTH luxR-type domain; the sequence is MMRDENPLTV…EAASIAEEKG (66 aa). The H-T-H motif DNA-binding region spans 157-176; that stretch reads TKDITLELYLSQGTVRNYIS.

In terms of processing, phosphorylated by YvfT.

It localises to the cytoplasm. Member of the two-component regulatory system YvfT/YvfU. This is an uncharacterized protein from Bacillus subtilis (strain 168).